Reading from the N-terminus, the 395-residue chain is Cyclin-A2 (395 aa).

Residues 1–93 (MLAEQENQEN…EEAADAPGLR (93 aa)) form a disordered region. Positions 27 to 60 (ALGLLRGGPARPGPAAQAARNGEGRGAAAGQQQQ) are enriched in low complexity.

Belongs to the cyclin family. Cyclin AB subfamily. As to quaternary structure, interacts with the CDK1 and CDK2 protein kinases to form serine/threonine kinase holoenzyme complexes.

The protein resides in the nucleus. The protein localises to the cytoplasm. Functionally, cyclin which controls both the G1/S and the G2/M transition phases of the cell cycle. Functions through the formation of specific serine/threonine kinase holoenzyme complexes with the cyclin-dependent protein kinases CDK1 and CDK2. The cyclin subunit confers the substrate specificity of these complexes and differentially interacts with and activates CDK1 and CDK2 throughout the cell cycle. The polypeptide is Cyclin-A2 (Gallus gallus (Chicken)).